A 400-amino-acid polypeptide reads, in one-letter code: Deoxyguanosinetriphosphate triphosphohydrolase-like protein (400 aa).

Residues 73 to 215 (RLTHSIEVSQ…AAIADDIAYN (143 aa)) form the HD domain.

It belongs to the dGTPase family. Type 2 subfamily.

This is Deoxyguanosinetriphosphate triphosphohydrolase-like protein from Bartonella henselae (strain ATCC 49882 / DSM 28221 / CCUG 30454 / Houston 1) (Rochalimaea henselae).